The primary structure comprises 254 residues: Triosephosphate isomerase (254 aa).

Substrate is bound at residue 10–12 (NWK). His-99 serves as the catalytic Electrophile. The active-site Proton acceptor is the Glu-169. Substrate-binding positions include Gly-175, Ser-215, and 236–237 (GG).

Belongs to the triosephosphate isomerase family. In terms of assembly, homodimer.

It localises to the cytoplasm. It carries out the reaction D-glyceraldehyde 3-phosphate = dihydroxyacetone phosphate. It participates in carbohydrate biosynthesis; gluconeogenesis. Its pathway is carbohydrate degradation; glycolysis; D-glyceraldehyde 3-phosphate from glycerone phosphate: step 1/1. Its function is as follows. Involved in the gluconeogenesis. Catalyzes stereospecifically the conversion of dihydroxyacetone phosphate (DHAP) to D-glyceraldehyde-3-phosphate (G3P). This is Triosephosphate isomerase from Chlamydia abortus (strain DSM 27085 / S26/3) (Chlamydophila abortus).